Reading from the N-terminus, the 222-residue chain is 7-cyano-7-deazaguanine synthase (222 aa).

14–24 serves as a coordination point for ATP; that stretch reads FSGGQDSTTCL. Residues cysteine 190, cysteine 199, cysteine 202, and cysteine 205 each contribute to the Zn(2+) site.

The protein belongs to the QueC family. In terms of assembly, homodimer. Requires Zn(2+) as cofactor.

It catalyses the reaction 7-carboxy-7-deazaguanine + NH4(+) + ATP = 7-cyano-7-deazaguanine + ADP + phosphate + H2O + H(+). Its pathway is purine metabolism; 7-cyano-7-deazaguanine biosynthesis. Catalyzes the ATP-dependent conversion of 7-carboxy-7-deazaguanine (CDG) to 7-cyano-7-deazaguanine (preQ(0)). In Staphylococcus aureus (strain Mu3 / ATCC 700698), this protein is 7-cyano-7-deazaguanine synthase.